The following is a 177-amino-acid chain: Transcription termination/antitermination protein NusG (177 aa).

In terms of domain architecture, KOW spans 125-150 (EGENVRITEGPFANFTAIVEEYDMVR).

Belongs to the NusG family.

Participates in transcription elongation, termination and antitermination. This chain is Transcription termination/antitermination protein NusG, found in Campylobacter jejuni subsp. jejuni serotype O:2 (strain ATCC 700819 / NCTC 11168).